The primary structure comprises 227 residues: Large ribosomal subunit protein uL3 (227 aa).

The residue at position 154 (glutamine 154) is an N5-methylglutamine.

The protein belongs to the universal ribosomal protein uL3 family. In terms of assembly, part of the 50S ribosomal subunit. Forms a cluster with proteins L14 and L19. Post-translationally, methylated by PrmB.

In terms of biological role, one of the primary rRNA binding proteins, it binds directly near the 3'-end of the 23S rRNA, where it nucleates assembly of the 50S subunit. The polypeptide is Large ribosomal subunit protein uL3 (Acidiphilium cryptum (strain JF-5)).